The following is a 167-amino-acid chain: NADH-ubiquinone oxidoreductase chain 6 (167 aa).

Helical transmembrane passes span 1–21, 23–43, 47–67, 86–106, and 133–153; these read MVLM…VASN, SPYF…GMLM, MTFL…VVFA, VFSY…AFVG, and AGGY…LVVL.

This sequence belongs to the complex I subunit 6 family.

The protein localises to the mitochondrion membrane. It catalyses the reaction a ubiquinone + NADH + 5 H(+)(in) = a ubiquinol + NAD(+) + 4 H(+)(out). In terms of biological role, core subunit of the mitochondrial membrane respiratory chain NADH dehydrogenase (Complex I) that is believed to belong to the minimal assembly required for catalysis. Complex I functions in the transfer of electrons from NADH to the respiratory chain. The immediate electron acceptor for the enzyme is believed to be ubiquinone. This is NADH-ubiquinone oxidoreductase chain 6 (MT-ND6) from Polypterus ornatipinnis (Ornate bichir).